A 67-amino-acid polypeptide reads, in one-letter code: Large ribosomal subunit protein bL32 (67 aa).

Basic residues predominate over residues 1–19 (MAVPKRKMSRSNTRSRRSQ). The disordered stretch occupies residues 1–22 (MAVPKRKMSRSNTRSRRSQWKA).

Belongs to the bacterial ribosomal protein bL32 family.

This Kineococcus radiotolerans (strain ATCC BAA-149 / DSM 14245 / SRS30216) protein is Large ribosomal subunit protein bL32.